The primary structure comprises 146 residues: Hemoglobin subunit beta (146 aa).

The Globin domain occupies H2 to H146. Heme b contacts are provided by H63 and H92.

The protein belongs to the globin family. Heterotetramer of two alpha chains and two beta chains. In terms of tissue distribution, red blood cells.

Its function is as follows. Involved in oxygen transport from the lung to the various peripheral tissues. The sequence is that of Hemoglobin subunit beta (HBB) from Aegypius monachus (Cinereous vulture).